Here is an 819-residue protein sequence, read N- to C-terminus: Probable cadmium/zinc-transporting ATPase HMA1, chloroplastic (819 aa).

A chloroplast-targeting transit peptide spans 1–17 (MEPATLTRSSSLTRFPY). Over 18–122 (RRGLSTLRLA…IGWVRLANYL (105 aa)) the chain is Stromal. Basic and acidic residues predominate over residues 66 to 79 (DHHHDHHHDDEQDH). Residues 66-87 (DHHHDHHHDDEQDHHNHHHHHH) form a disordered region. Residues 123-144 (REHLHLCCSAAAMFLAAAVCPY) traverse the membrane as a helical segment. Over 145 to 153 (LAPEPYIKS) the chain is Lumenal. A helical transmembrane segment spans residues 154 to 173 (LQNAFMIVGFPLVGVSASLD). Topologically, residues 174-180 (ALMDIAG) are stromal. Residues 181-201 (GKVNIHVLMALAAFASVFMGN) form a helical membrane-spanning segment. Ala-202 is a topological domain (lumenal). The helical transmembrane segment at 203–223 (LEGGLLLAMFNLAHIAEEFFT) threads the bilayer. At 224 to 361 (SRSMVDVKEL…KPKLQRWLDE (138 aa)) the chain is on the stromal side. Residues 362–384 (FGENYSKVVVVLSLAIAFLGPFL) traverse the membrane as a helical segment. Over 385 to 398 (FKWPFLSTAACRGS) the chain is Lumenal. Residues 399–416 (VYRALGLMVAASPCALAV) traverse the membrane as a helical segment. The Stromal portion of the chain corresponds to 417–737 (APLAYATAIS…AKSRQTTSLV (321 aa)). Residue Asp-453 is the 4-aspartylphosphate intermediate of the active site. Residues Glu-682 and Asp-686 each contribute to the Mg(2+) site. Residues 738 to 757 (KQNVALALTSIFLAALPSVL) traverse the membrane as a helical segment. The Lumenal portion of the chain corresponds to 758 to 762 (GFVPL). Residues 763–781 (WLTVLLHEGGTLLVCLNSV) traverse the membrane as a helical segment. The Stromal segment spans residues 782-819 (RGLNDPSWSWKQDIVHLINKLRSQEPTSSSSNSLSSAH).

Belongs to the cation transport ATPase (P-type) (TC 3.A.3) family. Type IB subfamily.

The protein resides in the plastid. It localises to the chloroplast inner membrane. The catalysed reaction is Zn(2+)(in) + ATP + H2O = Zn(2+)(out) + ADP + phosphate + H(+). The enzyme catalyses Cd(2+)(in) + ATP + H2O = Cd(2+)(out) + ADP + phosphate + H(+). In terms of biological role, involved in cadmium/zinc transport. The protein is Probable cadmium/zinc-transporting ATPase HMA1, chloroplastic (HMA1) of Arabidopsis thaliana (Mouse-ear cress).